The chain runs to 137 residues: Gonadotropin subunit beta-2 (137 aa).

The first 24 residues, 1 to 24 (MLPFMLSSFLGASPSIWPLAPAEA), serve as a signal peptide directing secretion. Intrachain disulfides connect Cys-30–Cys-76, Cys-44–Cys-91, Cys-47–Cys-129, Cys-55–Cys-107, Cys-59–Cys-109, and Cys-112–Cys-119. N-linked (GlcNAc...) asparagine glycosylation occurs at Asn-34.

This sequence belongs to the glycoprotein hormones subunit beta family. As to quaternary structure, heterodimer of an alpha and a beta chain.

Its subcellular location is the secreted. Involved in gametogenesis and steroidogenesis. The protein is Gonadotropin subunit beta-2 (cgbb) of Acanthopagrus latus (Yellowfin seabream).